Reading from the N-terminus, the 151-residue chain is UPF0756 membrane protein Hore_21770 (151 aa).

Transmembrane regions (helical) follow at residues 7–29 (LLIITILGFLARSRVLVIAGLLL), 49–69 (IEIGLIFLLMAILSSLVLSPV), 84–104 (TVAIIAGVLATKFNGMGLDLL), 110–130 (FILGIIMGSLVGIVFFGGIPV), and 131–151 (GPLMAAGIGAVLFKIIEIIKG).

It belongs to the UPF0756 family.

Its subcellular location is the cell membrane. The chain is UPF0756 membrane protein Hore_21770 from Halothermothrix orenii (strain H 168 / OCM 544 / DSM 9562).